A 58-amino-acid chain; its full sequence is Metallothionein (58 aa).

Residues 1 to 29 (MPGPCCNDVCECAAGGCKTGCVCTSCRCS) form a beta region. Positions 5, 6, 10, 12, 17, 21, 23, 26, 28, 31, 34, 38, 40, 46, 50, 54, 56, and 57 each coordinate a divalent metal cation. An alpha region spans residues 30 to 58 (PCDKCTSGCKCPSKEECAKTCSKPCECCP).

Functionally, metallothioneins have a high content of cysteine residues that bind various heavy metals. Class I MTS in crustacea are involved in the sequestration of elevated levels of heavy-metal ions. The polypeptide is Metallothionein (Astacus astacus (Noble crayfish)).